Here is a 205-residue protein sequence, read N- to C-terminus: Microtubule-associated protein Jupiter (205 aa).

Serine 30 is subject to Phosphoserine. Residues threonine 41, threonine 98, and threonine 102 each carry the phosphothreonine modification. Over residues 124–135 (LISNSKGNYNGK) the composition is skewed to polar residues. Positions 124-205 (LISNSKGNYN…PPGGYSSGLW (82 aa)) are disordered. Positions 136–149 (SGSVSSASSSVSSS) are enriched in low complexity. Residues serine 138 and serine 149 each carry the phosphoserine modification. Residues 181–191 (PANNGSSQVIN) are compositionally biased toward polar residues.

This sequence belongs to the MAP Jupiter family.

It is found in the nucleus. The protein localises to the cytoplasm. Its subcellular location is the cytoskeleton. The protein resides in the spindle. Binds to all microtubule populations. The chain is Microtubule-associated protein Jupiter from Drosophila virilis (Fruit fly).